We begin with the raw amino-acid sequence, 634 residues long: MTNSNLRTENHFDYVKITLASPDRVMEWGQRTLPNGQVVGEVTKPETINYRTLKPEMDGLFCEKIFGPSKDWECHCGKYKRVRHRGIVCERCGVEVTESRVRRHRMGFIKLAAPVSHVWYLKGIPSYVAILLDMPLRDVEQIVYFNCYVVLDPGDHKDLKYKQLLTEDEWLEIEDEIYAEDSEIENEPVVGIGAEALKQLLEDLTLDEVAEQLREEIAGSKGQKRAKLIKRLRVIDNFIATNARPEWMVLDVIPVIPPDLRPMVQLDGGRFATSDLNDLYRRVINRNNRLARLQEILAPEIIVRNEKRMLQEAVDALIDNGRRGRTVVGANNRPLKSLSDIIEGKQGRFRQNLLGKRVDYSGRSVIVVGPKLKMHQCGLPKEMAIELFQPFVIHRLIRQNIVNNIKAAKKLIQRADDEVMQVLQEVIDGHPIMLNRAPTLHRLGIQAFEPKLVDGRAIQLHPLVCPAFNADFDGDQMAVHVPLAIEAQTEARMLMLASNNILSPATGEPIITPSQDMVLGAYYLTALQPDVQPVDFGDRSRTFSDLEDVIHAFEDKRLGLHDWVWVRFNGEVEDDDEREEPVSSETLSDGTRFEQWTYRRDRFDDDGALISRYILTTVGRVVMNHTIIDAVAAT.

Positions 74, 76, 89, and 92 each coordinate Zn(2+). Positions 471, 473, and 475 each coordinate Mg(2+).

Belongs to the RNA polymerase beta' chain family. RpoC1 subfamily. As to quaternary structure, in cyanobacteria the RNAP catalytic core is composed of 2 alpha, 1 beta, 1 beta', 1 gamma and 1 omega subunit. When a sigma factor is associated with the core the holoenzyme is formed, which can initiate transcription. The cofactor is Mg(2+). It depends on Zn(2+) as a cofactor.

The catalysed reaction is RNA(n) + a ribonucleoside 5'-triphosphate = RNA(n+1) + diphosphate. In terms of biological role, DNA-dependent RNA polymerase catalyzes the transcription of DNA into RNA using the four ribonucleoside triphosphates as substrates. The sequence is that of DNA-directed RNA polymerase subunit gamma from Synechococcus sp. (strain WH7803).